Here is a 598-residue protein sequence, read N- to C-terminus: Pentatricopeptide repeat-containing protein At1g09900 (598 aa).

PPR repeat units follow at residues 101 to 135 (EDVE…GNVP), 136 to 170 (DIIP…GAVP), 171 to 201 (DVIT…MSVS), 203 to 237 (DVVT…DCYP), 238 to 272 (DVIT…GCTP), 273 to 307 (DVVT…GCQP), 308 to 342 (NVIT…GFSP), 343 to 377 (SVVT…GCQP), 378 to 412 (NSLS…GCYP), 413 to 447 (DIVT…GCSP), 448 to 482 (VLIT…DLKP), 483 to 517 (DTIT…GIRP), 518 to 552 (NAVT…GCKP), and 553 to 587 (NETS…GLMK).

This sequence belongs to the PPR family. P subfamily.

The protein is Pentatricopeptide repeat-containing protein At1g09900 of Arabidopsis thaliana (Mouse-ear cress).